Consider the following 157-residue polypeptide: Protein FAM162B (157 aa).

A helical membrane pass occupies residues 104 to 123; it reads ACYIMIGLTIVACFAVIVSA.

It belongs to the UPF0389 family.

The protein localises to the membrane. The protein is Protein FAM162B (Fam162b) of Mus musculus (Mouse).